The sequence spans 104 residues: Elicitor peptide 6 (104 aa).

A propeptide spanning residues 1 to 81 (MEVNGEEERR…TVEETGFMAR (81 aa)) is cleaved from the precursor. Positions 48–61 (SSSIPPSSSSSSPS) are enriched in low complexity. The segment at 48–104 (SSSIPPSSSSSSPSLVEEEDSGTETVEETGFMARITAVLRRRPRPPPYSSGRPGQNN) is disordered. Residues 63 to 74 (VEEEDSGTETVE) show a composition bias toward acidic residues.

It belongs to the brassicaceae elicitor peptide family.

Elicitor of plant defense. The sequence is that of Elicitor peptide 6 (PEP6) from Arabidopsis thaliana (Mouse-ear cress).